The following is a 393-amino-acid chain: NAD(P)H-quinone oxidoreductase subunit H, chloroplastic (393 aa).

The protein belongs to the complex I 49 kDa subunit family. As to quaternary structure, NDH is composed of at least 16 different subunits, 5 of which are encoded in the nucleus. Interacts with the chaperonin CNP60B4 subunit.

It is found in the plastid. The protein localises to the chloroplast thylakoid membrane. The enzyme catalyses a plastoquinone + NADH + (n+1) H(+)(in) = a plastoquinol + NAD(+) + n H(+)(out). The catalysed reaction is a plastoquinone + NADPH + (n+1) H(+)(in) = a plastoquinol + NADP(+) + n H(+)(out). Functionally, NDH shuttles electrons from NAD(P)H:plastoquinone, via FMN and iron-sulfur (Fe-S) centers, to quinones in the photosynthetic chain and possibly in a chloroplast respiratory chain. The immediate electron acceptor for the enzyme in this species is believed to be plastoquinone. Couples the redox reaction to proton translocation, and thus conserves the redox energy in a proton gradient. The polypeptide is NAD(P)H-quinone oxidoreductase subunit H, chloroplastic (Arabidopsis thaliana (Mouse-ear cress)).